The primary structure comprises 206 residues: MAKYLGPKLKLSRREGTDLFLKSGVRAIESKCKIDHLPGQHGSRRSRLSDYGIQLREKQKLRRMYVILERQFKKYYKKAVRMKGNTGENLLILLESRLDNVVYRMGFGSTRLESRQLISHKSIIINKKVINIPSYQIKPNDCIEVKEIAKKQSRIKAAIEISEQREKQSWIDVDRVKMQGIFKKFPDRSDLSSEINEHLIIELYSK.

The S4 RNA-binding domain occupies 96-158 (SRLDNVVYRM…AKKQSRIKAA (63 aa)).

Belongs to the universal ribosomal protein uS4 family. Part of the 30S ribosomal subunit. Contacts protein S5. The interaction surface between S4 and S5 is involved in control of translational fidelity.

One of the primary rRNA binding proteins, it binds directly to 16S rRNA where it nucleates assembly of the body of the 30S subunit. In terms of biological role, with S5 and S12 plays an important role in translational accuracy. In Wigglesworthia glossinidia brevipalpis, this protein is Small ribosomal subunit protein uS4.